The primary structure comprises 1004 residues: 26S proteasome non-ATPase regulatory subunit 1 homolog A (1004 aa).

N-acetylalanine is present on alanine 2. Lysine 166 participates in a covalent cross-link: Glycyl lysine isopeptide (Lys-Gly) (interchain with G-Cter in ubiquitin). 10 PC repeats span residues serine 412–proline 447, glycine 452–glutamine 485, glycine 487–glutamate 521, alanine 522–isoleucine 555, glycine 557–tyrosine 590, glycine 591–arginine 626, threonine 627–arginine 659, glycine 661–glutamine 695, glycine 696–serine 736, and glycine 739–isoleucine 771. Disordered stretches follow at residues glutamate 858–proline 905 and valine 959–serine 1004. At serine 896 the chain carries Phosphoserine. Positions alanine 965–alanine 987 are enriched in low complexity.

The protein belongs to the proteasome subunit S1 family. Component of the 19S regulatory particle (RP/PA700) base subcomplex of the 26S proteasome. The 26S proteasome is composed of a core protease (CP), known as the 20S proteasome, capped at one or both ends by the 19S regulatory particle (RP/PA700). The RP/PA700 complex is composed of at least 17 different subunits in two subcomplexes, the base and the lid, which form the portions proximal and distal to the 20S proteolytic core, respectively. In terms of tissue distribution, ubiquitous with highest expression in flowers.

Acts as a regulatory subunit of the 26 proteasome which is involved in the ATP-dependent degradation of ubiquitinated proteins. The protein is 26S proteasome non-ATPase regulatory subunit 1 homolog A (RPN2A) of Arabidopsis thaliana (Mouse-ear cress).